The primary structure comprises 2409 residues: Reducing polyketide synthase FUB1 (2409 aa).

Positions 1-43 are enriched in low complexity; that stretch reads MTLSNGSNGANGTSNGHGAHPSANGFHNAANGGANNGTPNGGA. The disordered stretch occupies residues 1–49; sequence MTLSNGSNGANGTSNGHGAHPSANGFHNAANGGANNGTPNGGAEYNASL. Residues 57 to 479 form the Ketosynthase family 3 (KS3) domain; it reads SSAIAVIGVS…GANAHAVLDD (423 aa). Catalysis depends on for beta-ketoacyl synthase activity residues cysteine 230, histidine 365, and histidine 403. Positions 608 to 929 are malonyl-CoA:ACP transacylase (MAT) domain; the sequence is TFIFTGQGAQ…FSAIKRKQDA (322 aa). Serine 699 (for malonyltransferase activity) is an active-site residue. The N-terminal hotdog fold stretch occupies residues 994 to 1127; sequence LELLGVRDPR…GLVSTSYKRE (134 aa). The 314-residue stretch at 994-1307 folds into the PKS/mFAS DH domain; it reads LELLGVRDPR…TVPLRGASDP (314 aa). The segment at 995-1302 is dehydratase (DH) domain; the sequence is ELLGVRDPRS…LEGCKTVPLR (308 aa). The active-site Proton acceptor; for dehydratase activity is histidine 1026. The tract at residues 1155 to 1307 is C-terminal hotdog fold; it reads LPSVDPTVFY…TVPLRGASDP (153 aa). Aspartate 1220 serves as the catalytic Proton donor; for dehydratase activity. The tract at residues 1713-2025 is enoyl reductase (ER) domain; it reads GLLDTLEYLS…SGGHVGKIVL (313 aa). Residues 2049–2225 form a ketoreductase (KR) domain region; that stretch reads ATYVLIGGLG…AATSINLSLV (177 aa). One can recognise a Carrier domain in the interval 2328–2405; the sequence is EVYEIVLQQL…GFAKKVMAKS (78 aa). Serine 2365 carries the O-(pantetheine 4'-phosphoryl)serine modification.

Its pathway is mycotoxin biosynthesis. Its function is as follows. Reducing polyketide synthase; part of the gene cluster that mediates the biosynthesis of fusaric acid, a mycotoxin with low to moderate toxicity to animals and humans, but with high phytotoxic properties. L-aspartate is suggested as fusaric acid amino acid precursor that is activated and further processed to O-acetyl-L-homoserine by cluster enzymes aspartate kinase FUB3 and homoserine O-acetyltransferase FUB5, as well as enzymes of the primary metabolism. The polyketide synthase (PKS) FUB1 generates the triketide trans-2-hexenal which is presumptively released by the hydrolase FUB4 and linked to the NRPS-bound amino acid precursor by NAD(P)-dependent dehydrogenase FUB6. FUB1, FUB4, and the non-canonical NRPS Fub8 may form an enzyme complex. Further processing of the NRPS-bound intermediate might be carried out by FUB6 and the sulfhydrylase FUB7, enabling a spontaneous electrocyclization to close the carbon backbone of fusaric acid. Dihydrofusaric acid is likely to be released via reduction by the thioester reductase (TR) domain of FUB8 whereupon the final oxidation to fusaric acid may (also) be performed by the FMN-dependent dehydrogenase FUB9. This chain is Reducing polyketide synthase FUB1, found in Gibberella moniliformis (strain M3125 / FGSC 7600) (Maize ear and stalk rot fungus).